Consider the following 176-residue polypeptide: Peroxiredoxin AHP1 (176 aa).

S2 carries the post-translational modification N-acetylserine. Positions 9–176 (FPAGDYKFQY…SSVESVLAHL (168 aa)) constitute a Thioredoxin domain. S28 bears the Phosphoserine mark. A Glycyl lysine isopeptide (Lys-Gly) (interchain with G-Cter in URM1) cross-link involves residue K32. Residue K48 forms a Glycyl lysine isopeptide (Lys-Gly) (interchain with G-Cter in ubiquitin); alternate linkage. K48 is covalently cross-linked (Glycyl lysine isopeptide (Lys-Gly) (interchain with G-Cter in URM1); alternate). S59 carries the phosphoserine modification. C62 acts as the Cysteine sulfenic acid (-SOH) intermediate in catalysis. Position 62 is a cysteine persulfide (C62). A Glycyl lysine isopeptide (Lys-Gly) (interchain with G-Cter in URM1) cross-link involves residue K79. Residue K81 forms a Glycyl lysine isopeptide (Lys-Gly) (interchain with G-Cter in ubiquitin); alternate linkage. A Glycyl lysine isopeptide (Lys-Gly) (interchain with G-Cter in URM1); alternate cross-link involves residue K81. K107 participates in a covalent cross-link: Glycyl lysine isopeptide (Lys-Gly) (interchain with G-Cter in URM1). K113 participates in a covalent cross-link: Glycyl lysine isopeptide (Lys-Gly) (interchain with G-Cter in ubiquitin). Position 116 is a phosphoserine (S116). Position 120 is a cysteine persulfide (C120). A Glycyl lysine isopeptide (Lys-Gly) (interchain with G-Cter in URM1) cross-link involves residue K124. Residue K156 forms a Glycyl lysine isopeptide (Lys-Gly) (interchain with G-Cter in URM1); alternate linkage. K156 participates in a covalent cross-link: Glycyl lysine isopeptide (Lys-Gly) (interchain with G-Cter in SUMO); alternate.

This sequence belongs to the peroxiredoxin family. Prx5 subfamily. In terms of assembly, homodimer; disulfide-linked, upon oxidation. Post-translationally, conjugated to URM1, a ubiquitin-like protein, in response to oxidative stresses. The attachment of URM1 to lysine residues exclusively depends on the presence of a peroxidatic cysteine in the target protein, with low specificity for the particular residue, motif, or structural context at which urmylation can occur. The URM1-conjugation reaction is mechanistically and directly coupled to the process of cysteine persulfidation, transfering the sulfur atom of the URM1 thiocarboxyl group to redox-active cysteine residues in the target protein if it is exposed to oxidative conditions. Persulfidated on specific redox-active cysteine residues. Persulfidation (also called protein S-sulfhydration) may provide a molecular mechanism that enables cells to protect vulnerable cysteine residues from reactive oxygen species (ROS) under stress conditions.

It is found in the cytoplasm. It carries out the reaction a hydroperoxide + [thioredoxin]-dithiol = an alcohol + [thioredoxin]-disulfide + H2O. Thiol-specific peroxidase that catalyzes the reduction of hydrogen peroxide and organic hydroperoxides to water and alcohols, respectively. Plays a role in cell protection against oxidative stress by detoxifying peroxides and as sensor of hydrogen peroxide-mediated signaling events. Preferentially eliminates organic peroxides rather than hydrogen peroxide. Relays alkyl hydroperoxides as a signal to the transcription factor CAD1/YAP2 by inducing the formation of intramolecular disulfide bonds in CAD1, which causes its nuclear accumulation and activation. Involved in cellular Mn(2+) homeostasis. This chain is Peroxiredoxin AHP1, found in Saccharomyces cerevisiae (strain ATCC 204508 / S288c) (Baker's yeast).